The chain runs to 345 residues: Neurotrimin (345 aa).

A signal peptide spans 1–30 (MGVCGSLFLPWKCLVVVSLRLLFLVPTGVP). 3 Ig-like C2-type domains span residues 39–126 (PKAM…PKTS), 136–218 (PKIV…VKVT), and 222–309 (PPYI…ASIT). N-linked (GlcNAc...) asparagine glycans are attached at residues Asn44, Asn70, and Asn152. A disulfide bridge links Cys57 with Cys115. Disulfide bonds link Cys157–Cys201 and Cys243–Cys295. N-linked (GlcNAc...) asparagine glycans are attached at residues Asn284, Asn292, Asn305, and Asn321. Asn321 carries GPI-anchor amidated asparagine lipidation. The propeptide at 322-345 (GTSSRRAGCLWLLPLLVLHLLLKF) is removed in mature form.

The protein belongs to the immunoglobulin superfamily. IgLON family.

The protein resides in the cell membrane. Its function is as follows. Neural cell adhesion molecule. This chain is Neurotrimin (NTM), found in Bos taurus (Bovine).